We begin with the raw amino-acid sequence, 321 residues long: Putative ankyrin repeat domain-containing protein 26-like protein (321 aa).

ANK repeat units lie at residues Lys-48–Glu-78, Lys-82–Val-111, Lys-115–Leu-144, Tyr-148–Ser-177, and Asp-181–Ala-210. Disordered stretches follow at residues Glu-222 to Asn-242 and Phe-268 to Ile-321. Over residues Pro-229 to Asn-242 the composition is skewed to polar residues.

The sequence is that of Putative ankyrin repeat domain-containing protein 26-like protein (ANKRD26P1) from Homo sapiens (Human).